The following is a 467-amino-acid chain: Coiled-coil domain-containing protein 71 (467 aa).

Residues Pro-81–Thr-105 form a disordered region. Residues Ala-88 to Thr-105 are compositionally biased toward low complexity. Residue Ser-129 is modified to Phosphoserine. Disordered regions lie at residues Lys-211–Thr-280 and Val-349–Leu-416. Positions Gly-253–Pro-265 are enriched in polar residues. Residues Lys-279–Gln-359 adopt a coiled-coil conformation. Residues Val-349–Lys-380 show a composition bias toward basic residues. Basic and acidic residues predominate over residues Arg-392 to Pro-401.

The sequence is that of Coiled-coil domain-containing protein 71 (CCDC71) from Homo sapiens (Human).